The primary structure comprises 358 residues: MALIMKYIDSMHHYMDKYGDPRTKDWPLMSSPFPTLALCLGYVYLVKVLGPRLMENRKPFQLRNTLILYNFVQVVFSAWLFYEIGISGWLTGHYNFRCQPVDYSNHPKTLRMVHACWWYYFSKFTEFFDTFFFVMRKKTSQVSTLHVIHHGCMPMSVWFGVKFTPGGHSTFFGLLNTFVHIVMYTYYLFTAMGPQFQKYLWWKKYLTSLQMVQFVAIMVHAFQLLFIDCNYPKAFVWWIGMHAVMFLFLFNEFYQSTYKATKRRRAAAAEARRLAAEEAKLQNGSAVSSNGSAITANGHHGKNGSVHHHSNGSATSNGTSLLSNGVGSNKAADYYVRGDLPAEIEITQRQPSSRNQVQ.

The next 7 membrane-spanning stretches (helical) occupy residues 26-46 (WPLM…VYLV), 66-86 (LILY…EIGI), 115-135 (ACWW…FFVM), 147-167 (VIHH…TPGG), 171-191 (FFGL…LFTA), 207-227 (TSLQ…LLFI), and 234-254 (AFVW…NEFY). Residues 285–295 (SAVSSNGSAIT) show a composition bias toward polar residues. Residues 285-322 (SAVSSNGSAITANGHHGKNGSVHHHSNGSATSNGTSLL) form a disordered region. Over residues 299 to 310 (HHGKNGSVHHHS) the composition is skewed to basic residues. Residues 311–322 (NGSATSNGTSLL) show a composition bias toward polar residues.

Belongs to the ELO family.

The protein resides in the membrane. It carries out the reaction a very-long-chain acyl-CoA + malonyl-CoA + H(+) = a very-long-chain 3-oxoacyl-CoA + CO2 + CoA. Functionally, could be implicated in synthesis of very long chain fatty acids. This Aedes aegypti (Yellowfever mosquito) protein is Very long chain fatty acid elongase AAEL008004.